A 217-amino-acid chain; its full sequence is Probable nicotinate-nucleotide adenylyltransferase (217 aa).

This sequence belongs to the NadD family.

It carries out the reaction nicotinate beta-D-ribonucleotide + ATP + H(+) = deamido-NAD(+) + diphosphate. It participates in cofactor biosynthesis; NAD(+) biosynthesis; deamido-NAD(+) from nicotinate D-ribonucleotide: step 1/1. Its function is as follows. Catalyzes the reversible adenylation of nicotinate mononucleotide (NaMN) to nicotinic acid adenine dinucleotide (NaAD). This chain is Probable nicotinate-nucleotide adenylyltransferase, found in Baumannia cicadellinicola subsp. Homalodisca coagulata.